The primary structure comprises 230 residues: DNA mismatch repair protein MutH (230 aa).

The protein belongs to the MutH family.

The protein resides in the cytoplasm. Functionally, sequence-specific endonuclease that cleaves unmethylated GATC sequences. It is involved in DNA mismatch repair. The protein is DNA mismatch repair protein MutH of Enterobacter sp. (strain 638).